A 412-amino-acid polypeptide reads, in one-letter code: Putative F-box protein At3g22940 (412 aa).

The F-box domain occupies 1-38 (MPLEEILSRLPLKSTRAVRSTCKKWDSLFKNRSFISKA).

The chain is Putative F-box protein At3g22940 from Arabidopsis thaliana (Mouse-ear cress).